A 263-amino-acid chain; its full sequence is 3-methyl-2-oxobutanoate hydroxymethyltransferase (263 aa).

Mg(2+)-binding residues include D43 and D82. 3-methyl-2-oxobutanoate contacts are provided by residues D43–S44, D82, and K111. E113 provides a ligand contact to Mg(2+). The active-site Proton acceptor is the E180.

Belongs to the PanB family. As to quaternary structure, homodecamer; pentamer of dimers. It depends on Mg(2+) as a cofactor.

The protein resides in the cytoplasm. It catalyses the reaction 3-methyl-2-oxobutanoate + (6R)-5,10-methylene-5,6,7,8-tetrahydrofolate + H2O = 2-dehydropantoate + (6S)-5,6,7,8-tetrahydrofolate. It functions in the pathway cofactor biosynthesis; (R)-pantothenate biosynthesis; (R)-pantoate from 3-methyl-2-oxobutanoate: step 1/2. Its function is as follows. Catalyzes the reversible reaction in which hydroxymethyl group from 5,10-methylenetetrahydrofolate is transferred onto alpha-ketoisovalerate to form ketopantoate. The polypeptide is 3-methyl-2-oxobutanoate hydroxymethyltransferase (Bdellovibrio bacteriovorus (strain ATCC 15356 / DSM 50701 / NCIMB 9529 / HD100)).